The primary structure comprises 106 residues: L-rhamnose mutarotase (106 aa).

Substrate is bound at residue Tyr20. The active-site Proton donor is the His24. Substrate is bound by residues Tyr43 and 78-79; that span reads WW.

Belongs to the rhamnose mutarotase family. In terms of assembly, homodimer.

The protein resides in the cytoplasm. The enzyme catalyses alpha-L-rhamnose = beta-L-rhamnose. Its pathway is carbohydrate degradation; L-rhamnose degradation. Its function is as follows. Involved in the anomeric conversion of L-rhamnose. This is L-rhamnose mutarotase (rhaM) from Rhizobium leguminosarum bv. trifolii.